The sequence spans 267 residues: Digeranylgeranylglyceryl phosphate synthase (267 aa).

7 helical membrane passes run 10-30 (ANCVMAGAASLTGMLVSGALL), 33-53 (LHTPVLVFSAVLLITGGGNAI), 80-100 (AALIWSVALFIAGCLIAGLIN), 104-121 (LALALLNSFVLIIYAARL), 139-159 (TFLFGGLAASPSSITAFLSIL), 198-218 (VLASLVLIVAMLLSYLVPLGI), and 247-267 (QRWIKMGMGMALVAFLIGYHI).

Belongs to the UbiA prenyltransferase family. DGGGP synthase subfamily. The cofactor is Mg(2+).

It is found in the cell membrane. It catalyses the reaction sn-3-O-(geranylgeranyl)glycerol 1-phosphate + (2E,6E,10E)-geranylgeranyl diphosphate = 2,3-bis-O-(geranylgeranyl)-sn-glycerol 1-phosphate + diphosphate. Its pathway is membrane lipid metabolism; glycerophospholipid metabolism. Prenyltransferase that catalyzes the transfer of the geranylgeranyl moiety of geranylgeranyl diphosphate (GGPP) to the C2 hydroxyl of (S)-3-O-geranylgeranylglyceryl phosphate (GGGP). This reaction is the second ether-bond-formation step in the biosynthesis of archaeal membrane lipids. The polypeptide is Digeranylgeranylglyceryl phosphate synthase (Methanothrix thermoacetophila (strain DSM 6194 / JCM 14653 / NBRC 101360 / PT) (Methanosaeta thermophila)).